Here is a 482-residue protein sequence, read N- to C-terminus: GPI mannosyltransferase 3 (482 aa).

A helical membrane pass occupies residues 12-32; it reads LFAFIFIFRLANSFAIETFFQ. N-linked (GlcNAc...) asparagine glycosylation occurs at Asn80. The next 4 helical transmembrane spans lie at 114–134, 137–155, 175–195, and 199–219; these read KLAW…YVIT, FSNN…FWPW, IIRP…LISI, and LKWV…NTAL. Residue Asn242 is glycosylated (N-linked (GlcNAc...) asparagine). Transmembrane regions (helical) follow at residues 252 to 272, 274 to 294, and 324 to 344; these read WHFY…PLMI, GLKK…FSLI, and FVLI…NVHE.

Belongs to the glycosyltransferase 22 family. PIGB subfamily.

The protein resides in the endoplasmic reticulum membrane. It participates in glycolipid biosynthesis; glycosylphosphatidylinositol-anchor biosynthesis. In terms of biological role, mannosyltransferase involved in glycosylphosphatidylinositol-anchor biosynthesis. Transfers the third mannose to Man2-GlcN-acyl-PI during GPI precursor assembly. In Candida albicans (strain SC5314 / ATCC MYA-2876) (Yeast), this protein is GPI mannosyltransferase 3 (GPI10).